An 828-amino-acid polypeptide reads, in one-letter code: Neurotrophin receptor-interacting factor 1 (828 aa).

The 72-residue stretch at 14–85 folds into the KRAB 1 domain; sequence VKFEDVSLTF…QREIPQDTLP (72 aa). Residue Lys15 forms a Glycyl lysine isopeptide (Lys-Gly) (interchain with G-Cter in ubiquitin) linkage. The SCAN box domain maps to 158–240; that stretch reads RQKFRHFQYE…ALLENMTSVS (83 aa). A KRAB 2 domain is found at 280 to 370; sequence VTFQDVAVDF…ESILEDGVKE (91 aa). 3 disordered regions span residues 328-355, 377-490, and 575-611; these read RELT…RNGT, NQVG…DPIT, and QKGY…LSTS. A compositionally biased stretch (polar residues) spans 345 to 355; sequence PNTNDLSRNGT. Over residues 384–394 the composition is skewed to basic and acidic residues; that stretch reads EKGHPQKKFSE. Basic residues predominate over residues 418-433; the sequence is KYVKVKQKGTGKRKGR. Residues 458–478 show a composition bias toward polar residues; sequence RSGSTPVTHGSSIKKQQQGSE. The segment covering 589–599 has biased composition (basic residues); sequence SWKHIKPHQKG. The span at 600-611 shows a compositional bias: basic and acidic residues; sequence SKGERVEELSTS. 5 consecutive C2H2-type zinc fingers follow at residues 684-706, 712-734, 740-762, 768-790, and 796-818; these read CRCS…KKIH, YMCM…LRIH, FECS…LRTH, YHCE…ERTH, and YVCI…QKTH.

Belongs to the krueppel C2H2-type zinc-finger protein family. As to quaternary structure, interacts with NGFR/p75(NTR). Interacts (via KRAB 1 domain) with TRAF6. Interacts (when ubiquitinated at Lys-15) with SQSTM1/p62. Ubiquitinated by TRAF6 at Lys-15 through 'Lys-63'-linked polyubiquitination. 'Lys-63'-linked polyubiquitination occurs in response to NGFR/p75(NTR) cleavage by gamma-secretase and promotes binding with the ICD cleavage product of NGFR/p75(NTR), followed by translocation into the nucleus and subsequent apoptosis. As to expression, ubiquitously expressed at low level. Expressed at higher level in testis.

The protein resides in the cytoplasm. It is found in the nucleus. Its function is as follows. Transcription regulator involved in NGFR/p75(NTR)-mediated apoptosis. Essential component of the NGFR/p75(NTR) apoptotic pathway: upon ligand-binding and subsequent cleavage of NGFR/p75(NTR), binds to the intracellular domain (ICD) cleavage product of NGFR/p75(NTR), translocates to the nucleus and induces apoptosis, possibly by regulating expression of key regulators of apoptosis. Induces NGFR/p75(NTR)-mediated apoptosis in retina and sympathetic neurons. May also regulate expression of neuronal cholesterol biosynthesis genes. Probably acts as a transcription repressor: specifically binds to the 3'-end of zinc-finger coding genes and recruiting chromatin-modifying proteins such as SETDB1 and TRIM28/KAP1, leading to transcription repression. The sequence is that of Neurotrophin receptor-interacting factor 1 (Nrif1) from Mus musculus (Mouse).